The primary structure comprises 184 residues: Probable cobalt-precorrin-6B C(15)-methyltransferase (decarboxylating) (184 aa).

S-adenosyl-L-methionine contacts are provided by residues T12, 36-40, D59, and A87; that span reads GCGTG.

Belongs to the methyltransferase superfamily. Archaeal-type CbiT family.

The catalysed reaction is Co-precorrin-6B + S-adenosyl-L-methionine = Co-precorrin-7 + S-adenosyl-L-homocysteine + CO2. It participates in cofactor biosynthesis; adenosylcobalamin biosynthesis; cob(II)yrinate a,c-diamide from sirohydrochlorin (anaerobic route): step 8/10. Catalyzes the methylation of C-15 in cobalt-precorrin-6B followed by the decarboxylation of C-12 to form cobalt-precorrin-7. The protein is Probable cobalt-precorrin-6B C(15)-methyltransferase (decarboxylating) of Methanosarcina mazei (strain ATCC BAA-159 / DSM 3647 / Goe1 / Go1 / JCM 11833 / OCM 88) (Methanosarcina frisia).